A 199-amino-acid polypeptide reads, in one-letter code: Twist-related protein 1 (199 aa).

Residues 1–18 are compositionally biased toward low complexity; sequence MMQDVSSSPVSPADDSLS. The interval 1–102 is disordered; that stretch reads MMQDVSSSPV…GGGSPQSYEE (102 aa). Residues 34 to 43 are compositionally biased toward basic residues; that stretch reads RGGRKRRSSR. 2 stretches are compositionally biased toward gly residues: residues 46–65 and 80–96; these read AGGG…GGDE and GCGG…GGGS. A bHLH domain is found at 105 to 156; the sequence is TQRVMANVRERQRTQSLNEAFAALRKIIPTLPSDKLSKIQTLKLAARYIDFL. Residues 158–188 form a sufficient for transactivation activity region; sequence QVLQSDELDSKMASCSYVAHERLSYAFSVWR.

In terms of assembly, efficient DNA binding requires dimerization with another bHLH protein. Homodimer or heterodimer with E proteins such as TCF3. ID1 binds preferentially to TCF3 but does not interact efficiently with TWIST1 so ID1 levels control the amount of TCF3 available to dimerize with TWIST and thus determine the type of dimer formed.

The protein resides in the nucleus. Functionally, acts as a transcriptional regulator. Inhibits myogenesis by sequestrating E proteins, inhibiting trans-activation by MEF2, and inhibiting DNA-binding by MYOD1 through physical interaction. This interaction probably involves the basic domains of both proteins. Also represses expression of pro-inflammatory cytokines such as TNFA and IL1B. Regulates cranial suture patterning and fusion. Activates transcription as a heterodimer with E proteins. Regulates gene expression differentially, depending on dimer composition. Homodimers induce expression of FGFR2 and POSTN while heterodimers repress FGFR2 and POSTN expression and induce THBS1 expression. Heterodimerization is also required for osteoblast differentiation. Represses the activity of the circadian transcriptional activator: NPAS2-BMAL1 heterodimer. The sequence is that of Twist-related protein 1 (TWIST1) from Microcebus murinus (Gray mouse lemur).